Consider the following 215-residue polypeptide: UPF0502 protein Shal_1801 (215 aa).

This sequence belongs to the UPF0502 family.

The polypeptide is UPF0502 protein Shal_1801 (Shewanella halifaxensis (strain HAW-EB4)).